Here is a 396-residue protein sequence, read N- to C-terminus: Elongation factor Tu (396 aa).

In terms of domain architecture, tr-type G spans 10 to 205 (KPHVNIGTIG…AVDESIPDPV (196 aa)). The segment at 19-26 (GHVDHGKT) is G1. A GTP-binding site is contributed by 19-26 (GHVDHGKT). A Mg(2+)-binding site is contributed by Thr-26. A G2 region spans residues 62–66 (GITIN). Positions 83–86 (DAPG) are G3. GTP is bound by residues 83-87 (DAPGH) and 138-141 (NKAD). The G4 stretch occupies residues 138–141 (NKAD). The segment at 175–177 (SAL) is G5.

Belongs to the TRAFAC class translation factor GTPase superfamily. Classic translation factor GTPase family. EF-Tu/EF-1A subfamily. As to quaternary structure, monomer.

It is found in the cytoplasm. The catalysed reaction is GTP + H2O = GDP + phosphate + H(+). Functionally, GTP hydrolase that promotes the GTP-dependent binding of aminoacyl-tRNA to the A-site of ribosomes during protein biosynthesis. This is Elongation factor Tu from Mycobacterium sp. (strain JLS).